The chain runs to 56 residues: Protein YqiD (56 aa).

A helical membrane pass occupies residues 2–22 (FIAWYWIVLIALVVVGYFLHL).

It localises to the cell inner membrane. The chain is Protein YqiD from Escherichia coli (strain K12).